The chain runs to 122 residues: MSLHNKSLGSKGESLAVTYLERHRYKILERNFRCRGGEIDIVARDGKTIVFVEVKTRTSGHYGPPQLAVTSFKQRQISKAALTWLAKQRQLDACARFDVISITFSGQMPQIEHIPNAFELAY.

It belongs to the UPF0102 family.

The protein is UPF0102 protein Gmet_2864 of Geobacter metallireducens (strain ATCC 53774 / DSM 7210 / GS-15).